The following is a 443-amino-acid chain: Trigger factor (443 aa).

Residues 161–246 enclose the PPIase FKBP-type domain; that stretch reads GDKVVIDFQG…IKKIMEGKLP (86 aa).

Belongs to the FKBP-type PPIase family. Tig subfamily.

Its subcellular location is the cytoplasm. It catalyses the reaction [protein]-peptidylproline (omega=180) = [protein]-peptidylproline (omega=0). Functionally, involved in protein export. Acts as a chaperone by maintaining the newly synthesized protein in an open conformation. Functions as a peptidyl-prolyl cis-trans isomerase. This is Trigger factor from Legionella pneumophila (strain Lens).